A 211-amino-acid polypeptide reads, in one-letter code: Outer-membrane lipoprotein carrier protein (211 aa).

The N-terminal stretch at M1–A24 is a signal peptide.

The protein belongs to the LolA family. In terms of assembly, monomer.

The protein resides in the periplasm. Participates in the translocation of lipoproteins from the inner membrane to the outer membrane. Only forms a complex with a lipoprotein if the residue after the N-terminal Cys is not an aspartate (The Asp acts as a targeting signal to indicate that the lipoprotein should stay in the inner membrane). The sequence is that of Outer-membrane lipoprotein carrier protein from Coxiella burnetii (strain RSA 331 / Henzerling II).